We begin with the raw amino-acid sequence, 382 residues long: cAMP-dependent protein kinase type I-alpha regulatory subunit (382 aa).

The residue at position 2 (A2) is an N-acetylalanine. The tract at residues 2 to 136 is dimerization and phosphorylation; the sequence is ATSSSSSSEE…AALAKAIEKN (135 aa). The tract at residues 62–96 is disordered; that stretch reads TKQLLNQQKSGSRSDSREDEISPPPPMNPVVKGRR. The short motif at 97-101 is the Pseudophosphorylation motif element; sequence RRGAI. Residues 138–255, E203, R212, 256–382, E327, and R336 each bind 3',5'-cyclic AMP; these read LFAH…SKVS and ILES…SLSV.

Belongs to the cAMP-dependent kinase regulatory chain family. As to quaternary structure, the inactive form of the enzyme is composed of two regulatory chains and two catalytic chains. Activation by cAMP produces two active catalytic monomers and a regulatory dimer that binds four cAMP molecules. In terms of processing, the pseudophosphorylation site binds to the substrate-binding region of the catalytic chain but is not phosphorylated. The physiological significance of phosphorylations by other kinases is unclear.

Its subcellular location is the cell membrane. This chain is cAMP-dependent protein kinase type I-alpha regulatory subunit (PRKAR1A), found in Gallus gallus (Chicken).